A 314-amino-acid chain; its full sequence is Putative lipoprotein LppW (314 aa).

The signal sequence occupies residues 1-22; sequence MRARPLTLLTALAAVTLVVVAG. The N-palmitoyl cysteine moiety is linked to residue C23. Residue C23 is the site of S-diacylglycerol cysteine attachment.

It localises to the cell membrane. The protein is Putative lipoprotein LppW (lppW) of Mycobacterium bovis (strain ATCC BAA-935 / AF2122/97).